Here is a 67-residue protein sequence, read N- to C-terminus: DNA-directed RNA polymerase subunit omega (67 aa).

This sequence belongs to the RNA polymerase subunit omega family. The RNAP catalytic core consists of 2 alpha, 1 beta, 1 beta' and 1 omega subunit. When a sigma factor is associated with the core the holoenzyme is formed, which can initiate transcription.

The catalysed reaction is RNA(n) + a ribonucleoside 5'-triphosphate = RNA(n+1) + diphosphate. Functionally, promotes RNA polymerase assembly. Latches the N- and C-terminal regions of the beta' subunit thereby facilitating its interaction with the beta and alpha subunits. The sequence is that of DNA-directed RNA polymerase subunit omega from Burkholderia ambifaria (strain ATCC BAA-244 / DSM 16087 / CCUG 44356 / LMG 19182 / AMMD) (Burkholderia cepacia (strain AMMD)).